Consider the following 258-residue polypeptide: MAKRLDLKGVNIYYGSFHAVAEVTLSVLPRSVTAFIGPSGCGKTTVLRTLNRMHEVVPGGRVEGSLLLDDEDIYGPGVDPVGVRRAIGMVFQRPNPFPAMSIRDNVVAGLKLQGVRNRKVLDETAEYSLRGANLWDEVKDRLDRPGGGLSGGQQQRLCIARAIAVQPDVLLMDEPCSALDPISTMAIEELISELKQDYTIVIVTHNMQQAARVSDYTAFFNLEAVGKPGRLIEVDDTEKIFSNPSQKATEDYISGRFG.

The ABC transporter domain occupies 5–247 (LDLKGVNIYY…EKIFSNPSQK (243 aa)). 37-44 (GPSGCGKT) contributes to the ATP binding site.

Belongs to the ABC transporter superfamily. Phosphate importer (TC 3.A.1.7) family. In terms of assembly, the complex is composed of two ATP-binding proteins (PstB), two transmembrane proteins (PstC and PstA) and a solute-binding protein (PstS).

It is found in the cell membrane. It catalyses the reaction phosphate(out) + ATP + H2O = ADP + 2 phosphate(in) + H(+). Part of the ABC transporter complex PstSACB involved in phosphate import. Responsible for energy coupling to the transport system. This Mycolicibacterium paratuberculosis (strain ATCC BAA-968 / K-10) (Mycobacterium paratuberculosis) protein is Phosphate import ATP-binding protein PstB.